Consider the following 96-residue polypeptide: MAAVWREGDDLLLRLYIQPKASRDSIVGLHGEELKVAITAPPIDGKANAHLSKYLAKLCKVAKGSVVIEKGELGRHKQVRILQPSQIPAEITALIE.

The protein belongs to the UPF0235 family.

The polypeptide is UPF0235 protein VC0395_A0010/VC395_0502 (Vibrio cholerae serotype O1 (strain ATCC 39541 / Classical Ogawa 395 / O395)).